A 205-amino-acid polypeptide reads, in one-letter code: Small ribosomal subunit protein uS4 (205 aa).

Residues 1-16 are compositionally biased toward basic and acidic residues; the sequence is MSKRETTKYKIDRRMG. Positions 1–46 are disordered; sequence MSKRETTKYKIDRRMGENIWGRPKSPVNRRDYGPGQHGQRRKGKLS. Residues 94-157 form the S4 RNA-binding domain; that stretch reads SRLDAVIYRA…KQLVLVLESV (64 aa).

The protein belongs to the universal ribosomal protein uS4 family. In terms of assembly, part of the 30S ribosomal subunit. Contacts protein S5. The interaction surface between S4 and S5 is involved in control of translational fidelity.

Functionally, one of the primary rRNA binding proteins, it binds directly to 16S rRNA where it nucleates assembly of the body of the 30S subunit. Its function is as follows. With S5 and S12 plays an important role in translational accuracy. This is Small ribosomal subunit protein uS4 from Bartonella quintana (strain Toulouse) (Rochalimaea quintana).